A 134-amino-acid chain; its full sequence is Small ribosomal subunit protein uS9 (134 aa).

Positions 114 to 134 (QKESKNFGGPGARAKYQKSYR) are disordered.

This sequence belongs to the universal ribosomal protein uS9 family.

The protein is Small ribosomal subunit protein uS9 of Methanosarcina acetivorans (strain ATCC 35395 / DSM 2834 / JCM 12185 / C2A).